Here is a 358-residue protein sequence, read N- to C-terminus: UDP-N-acetylglucosamine--N-acetylmuramyl-(pentapeptide) pyrophosphoryl-undecaprenol N-acetylglucosamine transferase (358 aa).

UDP-N-acetyl-alpha-D-glucosamine contacts are provided by residues 10–12, N124, S196, and Q293; that span reads TGG.

The protein belongs to the glycosyltransferase 28 family. MurG subfamily.

The protein localises to the cell membrane. The catalysed reaction is di-trans,octa-cis-undecaprenyl diphospho-N-acetyl-alpha-D-muramoyl-L-alanyl-D-glutamyl-meso-2,6-diaminopimeloyl-D-alanyl-D-alanine + UDP-N-acetyl-alpha-D-glucosamine = di-trans,octa-cis-undecaprenyl diphospho-[N-acetyl-alpha-D-glucosaminyl-(1-&gt;4)]-N-acetyl-alpha-D-muramoyl-L-alanyl-D-glutamyl-meso-2,6-diaminopimeloyl-D-alanyl-D-alanine + UDP + H(+). The protein operates within cell wall biogenesis; peptidoglycan biosynthesis. In terms of biological role, cell wall formation. Catalyzes the transfer of a GlcNAc subunit on undecaprenyl-pyrophosphoryl-MurNAc-pentapeptide (lipid intermediate I) to form undecaprenyl-pyrophosphoryl-MurNAc-(pentapeptide)GlcNAc (lipid intermediate II). The polypeptide is UDP-N-acetylglucosamine--N-acetylmuramyl-(pentapeptide) pyrophosphoryl-undecaprenol N-acetylglucosamine transferase (Exiguobacterium sp. (strain ATCC BAA-1283 / AT1b)).